The primary structure comprises 365 residues: Probable galacturonosyltransferase-like 10 (365 aa).

The Cytoplasmic portion of the chain corresponds to 1–10 (MMSGSRLASR). The chain crosses the membrane as a helical; Signal-anchor for type II membrane protein span at residues 11-31 (LIIIFSIISTSFFTVESIRLF). The Lumenal portion of the chain corresponds to 32 to 365 (PDSFDDASSD…LQYNQELEIL (334 aa)). N209 is a glycosylation site (N-linked (GlcNAc...) asparagine).

It belongs to the glycosyltransferase 8 family.

The protein localises to the golgi apparatus membrane. The protein operates within glycan metabolism; pectin biosynthesis. Its function is as follows. May be involved in pectin and/or xylans biosynthesis in cell walls. The sequence is that of Probable galacturonosyltransferase-like 10 (GATL10) from Arabidopsis thaliana (Mouse-ear cress).